A 738-amino-acid chain; its full sequence is Pentatricopeptide repeat-containing protein At5g65570 (738 aa).

PPR repeat units lie at residues 98–128, 129–163, 164–198, 200–230, 231–265, 266–300, 301–331, 332–366, 367–401, 402–432, 433–467, 468–502, and 503–537; these read AEIS…MSER, HIVT…NVLP, DEYT…GLEV, NVFV…VEEK, DVVL…KVQP, NEYT…GFES, ALAS…IEYP, NQVS…SIKP, NSFT…GFDR, DKYA…LSEV, DVIS…GLQP, NDVT…KIML, and TNDH…DLVL. Positions 537 to 612 are type E motif; that stretch reads LWRTLLSACK…NPAMSWVEIN (76 aa). Residues 613-644 form a type E(+) motif region; the sequence is KETHTFMAGDLFSHPNSEQILENLEELIKKSK. The segment at 645 to 738 is type DYW motif; sequence DLGYVEDKSC…DGSCSCGDYW (94 aa).

Belongs to the PPR family. PCMP-H subfamily.

The chain is Pentatricopeptide repeat-containing protein At5g65570 (PCMP-H47) from Arabidopsis thaliana (Mouse-ear cress).